The sequence spans 311 residues: 4-hydroxy-3-methylbut-2-enyl diphosphate reductase (311 aa).

C12 contributes to the [4Fe-4S] cluster binding site. (2E)-4-hydroxy-3-methylbut-2-enyl diphosphate contacts are provided by H43 and H81. Dimethylallyl diphosphate-binding residues include H43 and H81. Isopentenyl diphosphate is bound by residues H43 and H81. C103 is a [4Fe-4S] cluster binding site. Residue H131 coordinates (2E)-4-hydroxy-3-methylbut-2-enyl diphosphate. H131 contributes to the dimethylallyl diphosphate binding site. Position 131 (H131) interacts with isopentenyl diphosphate. Catalysis depends on E133, which acts as the Proton donor. A (2E)-4-hydroxy-3-methylbut-2-enyl diphosphate-binding site is contributed by T170. Residue C198 participates in [4Fe-4S] cluster binding. (2E)-4-hydroxy-3-methylbut-2-enyl diphosphate contacts are provided by S226, N228, and S271. S226, N228, and S271 together coordinate dimethylallyl diphosphate. Residues S226, N228, and S271 each coordinate isopentenyl diphosphate.

Belongs to the IspH family. The cofactor is [4Fe-4S] cluster.

It carries out the reaction isopentenyl diphosphate + 2 oxidized [2Fe-2S]-[ferredoxin] + H2O = (2E)-4-hydroxy-3-methylbut-2-enyl diphosphate + 2 reduced [2Fe-2S]-[ferredoxin] + 2 H(+). It catalyses the reaction dimethylallyl diphosphate + 2 oxidized [2Fe-2S]-[ferredoxin] + H2O = (2E)-4-hydroxy-3-methylbut-2-enyl diphosphate + 2 reduced [2Fe-2S]-[ferredoxin] + 2 H(+). It participates in isoprenoid biosynthesis; dimethylallyl diphosphate biosynthesis; dimethylallyl diphosphate from (2E)-4-hydroxy-3-methylbutenyl diphosphate: step 1/1. Its pathway is isoprenoid biosynthesis; isopentenyl diphosphate biosynthesis via DXP pathway; isopentenyl diphosphate from 1-deoxy-D-xylulose 5-phosphate: step 6/6. Functionally, catalyzes the conversion of 1-hydroxy-2-methyl-2-(E)-butenyl 4-diphosphate (HMBPP) into a mixture of isopentenyl diphosphate (IPP) and dimethylallyl diphosphate (DMAPP). Acts in the terminal step of the DOXP/MEP pathway for isoprenoid precursor biosynthesis. This chain is 4-hydroxy-3-methylbut-2-enyl diphosphate reductase, found in Brevibacillus brevis (strain 47 / JCM 6285 / NBRC 100599).